Here is a 443-residue protein sequence, read N- to C-terminus: UDP-N-acetylmuramate--L-alanine ligase (443 aa).

An ATP-binding site is contributed by 110–116 (GAHGKTS).

It belongs to the MurCDEF family.

The protein resides in the cytoplasm. It carries out the reaction UDP-N-acetyl-alpha-D-muramate + L-alanine + ATP = UDP-N-acetyl-alpha-D-muramoyl-L-alanine + ADP + phosphate + H(+). It functions in the pathway cell wall biogenesis; peptidoglycan biosynthesis. Functionally, cell wall formation. The protein is UDP-N-acetylmuramate--L-alanine ligase of Streptococcus agalactiae serotype III (strain NEM316).